A 95-amino-acid polypeptide reads, in one-letter code: Cell division topological specificity factor (95 aa).

This sequence belongs to the MinE family.

In terms of biological role, prevents the cell division inhibition by proteins MinC and MinD at internal division sites while permitting inhibition at polar sites. This ensures cell division at the proper site by restricting the formation of a division septum at the midpoint of the long axis of the cell. This is Cell division topological specificity factor from Synechococcus sp. (strain CC9902).